The chain runs to 211 residues: Urease accessory protein UreG (211 aa).

11-18 (GPVGAGKT) lines the GTP pocket.

This sequence belongs to the SIMIBI class G3E GTPase family. UreG subfamily. Homodimer. UreD, UreF and UreG form a complex that acts as a GTP-hydrolysis-dependent molecular chaperone, activating the urease apoprotein by helping to assemble the nickel containing metallocenter of UreC. The UreE protein probably delivers the nickel.

The protein resides in the cytoplasm. In terms of biological role, facilitates the functional incorporation of the urease nickel metallocenter. This process requires GTP hydrolysis, probably effectuated by UreG. The sequence is that of Urease accessory protein UreG from Actinobacillus pleuropneumoniae serotype 7 (strain AP76).